Reading from the N-terminus, the 85-residue chain is ATP synthase epsilon chain (85 aa).

It belongs to the ATPase epsilon chain family. In terms of assembly, F-type ATPases have 2 components, CF(1) - the catalytic core - and CF(0) - the membrane proton channel. CF(1) has five subunits: alpha(3), beta(3), gamma(1), delta(1), epsilon(1). CF(0) has three main subunits: a, b and c.

It is found in the cell membrane. Its function is as follows. Produces ATP from ADP in the presence of a proton gradient across the membrane. This chain is ATP synthase epsilon chain, found in Frankia casuarinae (strain DSM 45818 / CECT 9043 / HFP020203 / CcI3).